Here is a 1079-residue protein sequence, read N- to C-terminus: Psi-producing oxygenase A (1079 aa).

The tract at residues Thr105–Val446 is linoleate 8R-lipoxygenase. A heme b-binding site is contributed by His202. The active site involves Tyr374. His377 lines the heme b pocket. The 9,12-octadecadienoate 8-hydroperoxide 8R-isomerase stretch occupies residues Gln654–Glu1079.

It belongs to the peroxidase family. In terms of assembly, homotetramer. Requires heme b as cofactor.

The enzyme catalyses (9Z,12Z)-octadecadienoate + O2 = (8R,9Z,12Z)-8-hydroperoxyoctadeca-9,12-dienoate. The catalysed reaction is (8R,9Z,12Z)-8-hydroperoxyoctadeca-9,12-dienoate = (5S,8R,9Z,12Z)-5,8-dihydroxyoctadeca-9,12-dienoate. In terms of biological role, bifunctional heme-containing enzyme that oxidizes linoleic acid to (8R,9Z,12Z)-8-hydroperoxyoctadeca-9,12-dienoate (within the N-terminal heme peroxidase domain), which is subsequently isomerized to (5S,8R,9Z,12Z)-5,8-dihydroxyoctadeca-9,12-dienoate (within the C-terminal P450 heme thiolate domain). Oxidized unsaturated fatty acids, so-called oxylipins, derived from endogenous fatty acids, influence the development of the asexual conidiophores and sexual cleistothecia and regulate the secondary metabolism. These substances were collectively named psi factors and are primarily a mixture of hydroxylated oleic, linoleic and alpha-linolenic acids. They are termed psi-beta, psi-alpha, and psi-gamma, respectively. Oxylipins may also serve as activators of mammalian immune responses contributing to enhanced resistance to opportunistic fungi and as factors that modulate fungal development contributing to resistance to host defenses. The polypeptide is Psi-producing oxygenase A (ppoA) (Aspergillus fumigatus (strain ATCC MYA-4609 / CBS 101355 / FGSC A1100 / Af293) (Neosartorya fumigata)).